The chain runs to 796 residues: uncharacterized protein (796 aa).

The protein localises to the mitochondrion. This is an uncharacterized protein from Dictyostelium discoideum (Social amoeba).